The sequence spans 97 residues: MNIRLLHDRVIVKRKEMESKSAGGIVLTGSAAGKSTRGEVIAVGKGRVLENGNIQPLDVKIGDTIIFNDGYSVKVEKIDNQDVLIMSESDILAIVEE.

The protein belongs to the GroES chaperonin family. As to quaternary structure, heptamer of 7 subunits arranged in a ring. Interacts with the chaperonin GroEL.

The protein resides in the cytoplasm. Functionally, together with the chaperonin GroEL, plays an essential role in assisting protein folding. The GroEL-GroES system forms a nano-cage that allows encapsulation of the non-native substrate proteins and provides a physical environment optimized to promote and accelerate protein folding. GroES binds to the apical surface of the GroEL ring, thereby capping the opening of the GroEL channel. In Buchnera aphidicola subsp. Thelaxes suberi, this protein is Co-chaperonin GroES.